The sequence spans 242 residues: Ubiquinone biosynthesis O-methyltransferase (242 aa).

Arginine 44, glycine 64, aspartate 85, and methionine 129 together coordinate S-adenosyl-L-methionine.

The protein belongs to the methyltransferase superfamily. UbiG/COQ3 family.

It catalyses the reaction a 3-demethylubiquinol + S-adenosyl-L-methionine = a ubiquinol + S-adenosyl-L-homocysteine + H(+). It carries out the reaction a 3-(all-trans-polyprenyl)benzene-1,2-diol + S-adenosyl-L-methionine = a 2-methoxy-6-(all-trans-polyprenyl)phenol + S-adenosyl-L-homocysteine + H(+). Its pathway is cofactor biosynthesis; ubiquinone biosynthesis. In terms of biological role, O-methyltransferase that catalyzes the 2 O-methylation steps in the ubiquinone biosynthetic pathway. This chain is Ubiquinone biosynthesis O-methyltransferase, found in Salmonella typhi.